Reading from the N-terminus, the 201-residue chain is MYEYIRGQFQGISKDYVVIELNNIGYKIFTSGNTMSNMPKVGDEVLLYLEQIVREDFIGLYGFTTREELEMFKLLLSINGVGAKAALSLLSISTVNNLKYAIMMGDEKHITRAPGIGKKTAQRIILELKDKLKPDELTSEEGQLIEGINDNSDYSFNINETLSALMALGYTEKEAQKALEKVDKTLSIENMIKESLKLLMR.

A domain I region spans residues 1–64; that stretch reads MYEYIRGQFQ…EDFIGLYGFT (64 aa). A domain II region spans residues 65–143; the sequence is TREELEMFKL…PDELTSEEGQ (79 aa). Residues 144 to 152 are flexible linker; the sequence is LIEGINDNS. The segment at 153–201 is domain III; the sequence is DYSFNINETLSALMALGYTEKEAQKALEKVDKTLSIENMIKESLKLLMR.

The protein belongs to the RuvA family. Homotetramer. Forms an RuvA(8)-RuvB(12)-Holliday junction (HJ) complex. HJ DNA is sandwiched between 2 RuvA tetramers; dsDNA enters through RuvA and exits via RuvB. An RuvB hexamer assembles on each DNA strand where it exits the tetramer. Each RuvB hexamer is contacted by two RuvA subunits (via domain III) on 2 adjacent RuvB subunits; this complex drives branch migration. In the full resolvosome a probable DNA-RuvA(4)-RuvB(12)-RuvC(2) complex forms which resolves the HJ.

It is found in the cytoplasm. Functionally, the RuvA-RuvB-RuvC complex processes Holliday junction (HJ) DNA during genetic recombination and DNA repair, while the RuvA-RuvB complex plays an important role in the rescue of blocked DNA replication forks via replication fork reversal (RFR). RuvA specifically binds to HJ cruciform DNA, conferring on it an open structure. The RuvB hexamer acts as an ATP-dependent pump, pulling dsDNA into and through the RuvAB complex. HJ branch migration allows RuvC to scan DNA until it finds its consensus sequence, where it cleaves and resolves the cruciform DNA. The protein is Holliday junction branch migration complex subunit RuvA of Clostridium perfringens (strain 13 / Type A).